The following is an 84-amino-acid chain: DNA-directed RNA polymerase subunit Rpo5 (84 aa).

This sequence belongs to the archaeal Rpo5/eukaryotic RPB5 RNA polymerase subunit family. As to quaternary structure, part of the 13-subunit RNA polymerase complex.

The protein resides in the cytoplasm. It carries out the reaction RNA(n) + a ribonucleoside 5'-triphosphate = RNA(n+1) + diphosphate. DNA-dependent RNA polymerase (RNAP) catalyzes the transcription of DNA into RNA using the four ribonucleoside triphosphates as substrates. This Saccharolobus solfataricus (strain ATCC 35092 / DSM 1617 / JCM 11322 / P2) (Sulfolobus solfataricus) protein is DNA-directed RNA polymerase subunit Rpo5.